The sequence spans 279 residues: Movement protein (279 aa).

Residues 256–266 (PPIAIGSPSAS) show a composition bias toward low complexity. The segment at 256-279 (PPIAIGSPSASRNNSFRSQVVNGL) is disordered. Residues 267-279 (RNNSFRSQVVNGL) are compositionally biased toward polar residues.

The protein belongs to the cucumovirus movement protein family.

The protein resides in the host cell junction. The protein localises to the host plasmodesma. In terms of biological role, transports viral genome to neighboring plant cells directly through plasmosdesmata, without any budding. The movement protein allows efficient cell to cell propagation, by bypassing the host cell wall barrier. Acts by forming a tubular structure at the host plasmodesmata, enlarging it enough to allow free passage of virion capsids. This chain is Movement protein, found in Cucumis sativus (Cucumber).